The primary structure comprises 473 residues: Photosystem II CP43 reaction center protein (473 aa).

The propeptide occupies 1-14 (MKTLYSLRRFYPVE). The residue at position 15 (threonine 15) is an N-acetylthreonine. Threonine 15 carries the post-translational modification Phosphothreonine. 5 helical membrane-spanning segments follow: residues 69–93 (LFEVAHFVPEKPMYEQGLILLPHLA), 134–155 (LIGPETLEESFPFFGYVWKDRN), 178–200 (KALYFGGIYDTWAPGGGDVRKIT), 255–275 (KPFAWARRAFVWSGEAYLSYS), and 291–312 (WFNNTAYPSEFYGPTGPEASQA). Residue glutamate 367 participates in [CaMn4O5] cluster binding. The chain crosses the membrane as a helical span at residues 447 to 471 (RARAAAAGFEKGIDRDFEPVLSMTP).

This sequence belongs to the PsbB/PsbC family. PsbC subfamily. In terms of assembly, PSII is composed of 1 copy each of membrane proteins PsbA, PsbB, PsbC, PsbD, PsbE, PsbF, PsbH, PsbI, PsbJ, PsbK, PsbL, PsbM, PsbT, PsbX, PsbY, PsbZ, Psb30/Ycf12, at least 3 peripheral proteins of the oxygen-evolving complex and a large number of cofactors. It forms dimeric complexes. Binds multiple chlorophylls and provides some of the ligands for the Ca-4Mn-5O cluster of the oxygen-evolving complex. It may also provide a ligand for a Cl- that is required for oxygen evolution. PSII binds additional chlorophylls, carotenoids and specific lipids. is required as a cofactor.

It localises to the plastid. It is found in the chloroplast thylakoid membrane. Its function is as follows. One of the components of the core complex of photosystem II (PSII). It binds chlorophyll and helps catalyze the primary light-induced photochemical processes of PSII. PSII is a light-driven water:plastoquinone oxidoreductase, using light energy to abstract electrons from H(2)O, generating O(2) and a proton gradient subsequently used for ATP formation. In Cryptomeria japonica (Japanese cedar), this protein is Photosystem II CP43 reaction center protein.